The sequence spans 275 residues: Pyridoxal phosphate homeostasis protein (275 aa).

Residue serine 6 is modified to Phosphoserine. Lysine 47 carries the N6-(pyridoxal phosphate)lysine modification. The residue at position 69 (tyrosine 69) is a Phosphotyrosine. N6-succinyllysine is present on lysine 125. A phosphoserine mark is found at serine 226 and serine 244.

It belongs to the pyridoxal phosphate-binding protein YggS/PROSC family.

In terms of biological role, pyridoxal 5'-phosphate (PLP)-binding protein, which may be involved in intracellular homeostatic regulation of pyridoxal 5'-phosphate (PLP), the active form of vitamin B6. In Pongo abelii (Sumatran orangutan), this protein is Pyridoxal phosphate homeostasis protein.